Reading from the N-terminus, the 761-residue chain is Ribonucleoside-diphosphate reductase 1 subunit alpha (761 aa).

The 91-residue stretch at 5–95 folds into the ATP-cone domain; the sequence is LLVTKRDGRT…IFHLRKKAFG (91 aa). Residues Lys9, 15–21, Thr55, and Lys91 each bind ATP; that span reads ERINLDK. Thr209 is a binding site for GDP. A disulfide bridge connects residues Cys225 and Cys462. DTTP contacts are provided by residues 232–234, Arg262, and Arg269; that span reads DSL. Asn437 is a GDP binding site. The Proton acceptor role is filled by Asn437. Cys439 acts as the Cysteine radical intermediate in catalysis. GDP-binding positions include Glu441 and 623-625; that span reads ETS. Glu441 functions as the Proton acceptor in the catalytic mechanism.

It belongs to the ribonucleoside diphosphate reductase large chain family. Tetramer of two alpha (R1) and two beta (R2) subunits. The B1 protein is a dimer of alpha subunits. A radical transfer pathway occurs between 'Tyr-122' of R2 and R1.

The enzyme catalyses a 2'-deoxyribonucleoside 5'-diphosphate + [thioredoxin]-disulfide + H2O = a ribonucleoside 5'-diphosphate + [thioredoxin]-dithiol. Its activity is regulated as follows. Under complex allosteric control mediated by deoxynucleoside triphosphates and ATP binding to separate specificity and activation sites on the alpha subunit. The type of nucleotide bound at the specificity site determines substrate preference. It seems probable that ATP makes the enzyme reduce CDP and UDP, dGTP favors ADP reduction and dTTP favors GDP reduction. Stimulated by ATP and inhibited by dATP binding to the activity site. Its function is as follows. Provides the precursors necessary for DNA synthesis. Catalyzes the biosynthesis of deoxyribonucleotides from the corresponding ribonucleotides. R1 contains the binding sites for both substrates and allosteric effectors and carries out the actual reduction of the ribonucleotide. The protein is Ribonucleoside-diphosphate reductase 1 subunit alpha (nrdA) of Salmonella typhimurium (strain LT2 / SGSC1412 / ATCC 700720).